The sequence spans 148 residues: Ubiquitin-like protein 4A (148 aa).

Residues M1 to A76 form the Ubiquitin-like domain.

Component of the bag6/bat3 complex.

It localises to the cytoplasm. It is found in the cytosol. The protein resides in the nucleus. In terms of biological role, as part of a cytosolic protein quality control complex, the bag6/bat3 complex, maintains misfolded and hydrophobic patches-containing proteins in a soluble state and participates in their proper delivery to the endoplasmic reticulum or alternatively can promote their sorting to the proteasome where they undergo degradation. The bag6/bat3 complex is involved in the post-translational delivery of tail-anchored/type II transmembrane proteins to the endoplasmic reticulum membrane. Similarly, the bag6/bat3 complex also functions as a sorting platform for proteins of the secretory pathway that are mislocalized to the cytosol either delivering them to the proteasome for degradation or to the endoplasmic reticulum. The bag6/bat3 complex also plays a role in the endoplasmic reticulum-associated degradation (ERAD), a quality control mechanism that eliminates unwanted proteins of the endoplasmic reticulum through their retrotranslocation to the cytosol and their targeting to the proteasome. It maintains these retrotranslocated proteins in an unfolded yet soluble state condition in the cytosol to ensure their proper delivery to the proteasome. The protein is Ubiquitin-like protein 4A (ubl4a) of Xenopus tropicalis (Western clawed frog).